Consider the following 321-residue polypeptide: Ribose-phosphate pyrophosphokinase (321 aa).

ATP contacts are provided by residues 44–46 and 103–104; these read DGE and RQ. The Mg(2+) site is built by His137 and Asp179. Lys202 is a catalytic residue. D-ribose 5-phosphate-binding positions include Arg204, Asp228, and 232–236; that span reads DTAGT.

The protein belongs to the ribose-phosphate pyrophosphokinase family. Class I subfamily. As to quaternary structure, homohexamer. Requires Mg(2+) as cofactor.

The protein resides in the cytoplasm. It catalyses the reaction D-ribose 5-phosphate + ATP = 5-phospho-alpha-D-ribose 1-diphosphate + AMP + H(+). It participates in metabolic intermediate biosynthesis; 5-phospho-alpha-D-ribose 1-diphosphate biosynthesis; 5-phospho-alpha-D-ribose 1-diphosphate from D-ribose 5-phosphate (route I): step 1/1. In terms of biological role, involved in the biosynthesis of the central metabolite phospho-alpha-D-ribosyl-1-pyrophosphate (PRPP) via the transfer of pyrophosphoryl group from ATP to 1-hydroxyl of ribose-5-phosphate (Rib-5-P). The chain is Ribose-phosphate pyrophosphokinase from Staphylococcus saprophyticus subsp. saprophyticus (strain ATCC 15305 / DSM 20229 / NCIMB 8711 / NCTC 7292 / S-41).